The sequence spans 517 residues: Crotonobetaine/carnitine--CoA ligase (517 aa).

This sequence belongs to the ATP-dependent AMP-binding enzyme family.

It catalyses the reaction 4-(trimethylamino)butanoate + ATP + CoA = 4-(trimethylamino)butanoyl-CoA + AMP + diphosphate. It carries out the reaction crotonobetaine + ATP + CoA = crotonobetainyl-CoA + AMP + diphosphate. The catalysed reaction is (R)-carnitine + ATP + CoA = (R)-carnitinyl-CoA + AMP + diphosphate. It participates in amine and polyamine metabolism; carnitine metabolism. Catalyzes the transfer of CoA to carnitine, generating the initial carnitinyl-CoA needed for the CaiB reaction cycle. Also has activity toward crotonobetaine and gamma-butyrobetaine. The protein is Crotonobetaine/carnitine--CoA ligase of Escherichia coli (strain SE11).